Consider the following 273-residue polypeptide: WIMGHMVNAIAQIDEFVNLGANSIETDVSFDSSANPEYTYHGIPCDCGRTCTKWEHFNEFLKGLRKATTPGDSKYHEKLVLVVFDLKTGSLYDNQASDAGKKLAKSLLQNYWNNGNNGGRAYIVLSIPNLAHYKLITGFKEALTSEGHPELMDKVGYDFSGNDDIGDVANAYKKAGVTGHAWQSDGITNCSLRGLDRVRKAVANRDSSNGYINKVYYWTVDKRQSTRDALDAGVDGIMTNYPDVIADVLNESAYKAKFRIASYDDNPWETFKN.

The active site involves His5. Glu25 and Asp27 together coordinate Mg(2+). Residue His41 is the Nucleophile of the active site. Intrachain disulfides connect Cys45–Cys51 and Cys47–Cys190. A Mg(2+)-binding site is contributed by Asp85. N-linked (GlcNAc...) asparagine glycosylation is found at Asn189 and Asn250.

This sequence belongs to the arthropod phospholipase D family. Class II subfamily. Mg(2+) serves as cofactor. As to expression, expressed by the venom gland.

Its subcellular location is the secreted. It carries out the reaction an N-(acyl)-sphingosylphosphocholine = an N-(acyl)-sphingosyl-1,3-cyclic phosphate + choline. The catalysed reaction is an N-(acyl)-sphingosylphosphoethanolamine = an N-(acyl)-sphingosyl-1,3-cyclic phosphate + ethanolamine. The enzyme catalyses a 1-acyl-sn-glycero-3-phosphocholine = a 1-acyl-sn-glycero-2,3-cyclic phosphate + choline. It catalyses the reaction a 1-acyl-sn-glycero-3-phosphoethanolamine = a 1-acyl-sn-glycero-2,3-cyclic phosphate + ethanolamine. Dermonecrotic toxins cleave the phosphodiester linkage between the phosphate and headgroup of certain phospholipids (sphingolipid and lysolipid substrates), forming an alcohol (often choline) and a cyclic phosphate. This toxin acts on sphingomyelin (SM). It may also act on ceramide phosphoethanolamine (CPE), lysophosphatidylcholine (LPC) and lysophosphatidylethanolamine (LPE), but not on lysophosphatidylserine (LPS), and lysophosphatidylglycerol (LPG). It acts by transphosphatidylation, releasing exclusively cyclic phosphate products as second products. Induces dermonecrosis, hemolysis, increased vascular permeability, edema, inflammatory response, and platelet aggregation. This is Dermonecrotic toxin LapSicTox-alphaIB1bi from Loxosceles apachea (Apache recluse spider).